The following is a 213-amino-acid chain: LexA repressor 2 (213 aa).

The segment at residues 27–47 is a DNA-binding region (H-T-H motif); that stretch reads QTEIARAFGFKGVRAAQYHLE. Active-site for autocatalytic cleavage activity residues include Ser-133 and Lys-170.

Belongs to the peptidase S24 family. Homodimer.

It carries out the reaction Hydrolysis of Ala-|-Gly bond in repressor LexA.. In terms of biological role, represses a number of genes involved in the response to DNA damage (SOS response), including recA and lexA. In the presence of single-stranded DNA, RecA interacts with LexA causing an autocatalytic cleavage which disrupts the DNA-binding part of LexA, leading to derepression of the SOS regulon and eventually DNA repair. The polypeptide is LexA repressor 2 (Xanthomonas oryzae pv. oryzae (strain KACC10331 / KXO85)).